The primary structure comprises 185 residues: Early nodulin-like protein 17 (185 aa).

Residues 1-21 (MARRDQLVSFLCFFLIVSAVA) form the signal peptide. The region spanning 37–137 (KQYVVGGRSG…GQRLMINVDS (101 aa)) is the Phytocyanin domain. N-linked (GlcNAc...) asparagine glycans are attached at residues N79 and N94. C93 and C125 are disulfide-bonded. The disordered stretch occupies residues 136 to 155 (DSAPSPSPSPSPAPQEAATA). S156 is lipidated: GPI-anchor amidated serine. The propeptide at 157–185 (AATSSSAATAAHALLLAAMAMMGLILGEW) is removed in mature form.

This sequence belongs to the early nodulin-like (ENODL) family. As to expression, expressed ubiquitously. Accumulates mainly in anthers, stigmas and ovaries.

The protein resides in the cell membrane. In terms of biological role, may act as a carbohydrate transporter. Required for male fertility and seed yield. The sequence is that of Early nodulin-like protein 17 from Oryza sativa subsp. japonica (Rice).